The following is a 544-amino-acid chain: Zinc finger and SCAN domain-containing protein 25 (544 aa).

Glycyl lysine isopeptide (Lys-Gly) (interchain with G-Cter in SUMO2) cross-links involve residues K3 and K22. An SCAN box domain is found at 42–124 (RLRFRQFRYQ…AMVEDLTERA (83 aa)). A Glycyl lysine isopeptide (Lys-Gly) (interchain with G-Cter in SUMO2) cross-link involves residue K128. Residues 157-189 (VEVKPEWGMPPGEGVQGPDPGTEEQLSQDPGDE) form a disordered region. Residues K278 and K285 each participate in a glycyl lysine isopeptide (Lys-Gly) (interchain with G-Cter in SUMO2) cross-link. 6 C2H2-type zinc fingers span residues 348 to 370 (FQCPECGKGFSRSSNLVRHQRTH), 375 to 397 (YGCVECGKGFTLREYLMKHQRTH), 403 to 425 (YVCSECWKTFSQRHHLEVHQRSH), 431 to 453 (YKCGDCWKSFSRRQHLQVHRRTH), 459 to 480 (YTCECGKSFSRNANLAVHRRAH), and 486 to 508 (YGCQVCGKRFSKGERLVRHQRIH). Residues 514–536 (YHCPACGRSFNQRSILNRHQKTQ) form a C2H2-type 7; degenerate zinc finger.

It belongs to the krueppel C2H2-type zinc-finger protein family.

Its subcellular location is the nucleus. In terms of biological role, may be involved in transcriptional regulation. The chain is Zinc finger and SCAN domain-containing protein 25 (ZSCAN25) from Homo sapiens (Human).